A 312-amino-acid chain; its full sequence is Very-long-chain 3-oxoacyl-CoA reductase (312 aa).

The chain crosses the membrane as a helical span at residues 4–24 (ALPAAGFLYWVGAGTVAYLAL). 50-79 (GEWAVVTGSTDGIGKSYAEELAKHGMKVVL) provides a ligand contact to NADP(+). The next 2 helical transmembrane spans lie at 182–202 (GAIL…LTIY) and 271–291 (GYLI…WIYL). Ser-189 lines the substrate pocket. Tyr-202 functions as the Proton acceptor in the catalytic mechanism. Residues 308 to 312 (KTKKN) carry the Di-lysine motif motif.

The protein belongs to the short-chain dehydrogenases/reductases (SDR) family. 17-beta-HSD 3 subfamily. Interacts with ELOVL1 and LASS2. In terms of tissue distribution, expressed in most tissues tested. Highly expressed in the ovary and mammary. Expressed in platelets.

The protein resides in the endoplasmic reticulum membrane. It catalyses the reaction a very-long-chain (3R)-3-hydroxyacyl-CoA + NADP(+) = a very-long-chain 3-oxoacyl-CoA + NADPH + H(+). The catalysed reaction is 17beta-estradiol + NAD(+) = estrone + NADH + H(+). The enzyme catalyses 17beta-estradiol + NADP(+) = estrone + NADPH + H(+). It carries out the reaction 3-oxooctadecanoyl-CoA + NADPH + H(+) = (3R)-hydroxyoctadecanoyl-CoA + NADP(+). It catalyses the reaction (7Z,10Z,13Z,16Z)-3-oxodocosatetraenoyl-CoA + NADPH + H(+) = (3R)-hydroxy-(7Z,10Z,13Z,16Z)-docosatetraenoyl-CoA + NADP(+). The catalysed reaction is 3-oxo-(7Z,10Z,13Z,16Z,19Z)-docosapentaenoyl-CoA + NADPH + H(+) = (3R)-hydroxy-(7Z,10Z,13Z,16Z,19Z)-docosapentaenoyl-CoA + NADP(+). The enzyme catalyses (8Z,11Z,14Z)-3-oxoeicosatrienoyl-CoA + NADPH + H(+) = (3R)-hydroxy-(8Z,11Z,14Z)-eicosatrienoyl-CoA + NADP(+). Its pathway is lipid metabolism; fatty acid biosynthesis. It functions in the pathway steroid biosynthesis; estrogen biosynthesis. In terms of biological role, catalyzes the second of the four reactions of the long-chain fatty acids elongation cycle. This endoplasmic reticulum-bound enzymatic process, allows the addition of two carbons to the chain of long- and very long-chain fatty acids/VLCFAs per cycle. This enzyme has a 3-ketoacyl-CoA reductase activity, reducing 3-ketoacyl-CoA to 3-hydroxyacyl-CoA, within each cycle of fatty acid elongation. Thereby, it may participate in the production of VLCFAs of different chain lengths that are involved in multiple biological processes as precursors of membrane lipids and lipid mediators. May also catalyze the transformation of estrone (E1) into estradiol (E2) and play a role in estrogen formation. This is Very-long-chain 3-oxoacyl-CoA reductase from Homo sapiens (Human).